The chain runs to 303 residues: Lipoyl synthase (303 aa).

[4Fe-4S] cluster-binding residues include C40, C45, C51, C67, C71, C74, and S280. A Radical SAM core domain is found at A53–S269.

This sequence belongs to the radical SAM superfamily. Lipoyl synthase family. It depends on [4Fe-4S] cluster as a cofactor.

It localises to the cytoplasm. The enzyme catalyses [[Fe-S] cluster scaffold protein carrying a second [4Fe-4S](2+) cluster] + N(6)-octanoyl-L-lysyl-[protein] + 2 oxidized [2Fe-2S]-[ferredoxin] + 2 S-adenosyl-L-methionine + 4 H(+) = [[Fe-S] cluster scaffold protein] + N(6)-[(R)-dihydrolipoyl]-L-lysyl-[protein] + 4 Fe(3+) + 2 hydrogen sulfide + 2 5'-deoxyadenosine + 2 L-methionine + 2 reduced [2Fe-2S]-[ferredoxin]. The protein operates within protein modification; protein lipoylation via endogenous pathway; protein N(6)-(lipoyl)lysine from octanoyl-[acyl-carrier-protein]. Its function is as follows. Catalyzes the radical-mediated insertion of two sulfur atoms into the C-6 and C-8 positions of the octanoyl moiety bound to the lipoyl domains of lipoate-dependent enzymes, thereby converting the octanoylated domains into lipoylated derivatives. This is Lipoyl synthase from Halalkalibacterium halodurans (strain ATCC BAA-125 / DSM 18197 / FERM 7344 / JCM 9153 / C-125) (Bacillus halodurans).